Here is a 113-residue protein sequence, read N- to C-terminus: Putative membrane protein insertion efficiency factor (113 aa).

It belongs to the UPF0161 family.

The protein resides in the cell inner membrane. Its function is as follows. Could be involved in insertion of integral membrane proteins into the membrane. This is Putative membrane protein insertion efficiency factor from Campylobacter curvus (strain 525.92).